A 559-amino-acid polypeptide reads, in one-letter code: Excitatory amino acid transporter 5 (559 aa).

Residues 1-16 lie on the Cytoplasmic side of the membrane; sequence MVLDAVLARGRTVCKH. 3 helical membrane passes run 17–37, 60–80, and 94–114; these read NGLL…GFFL, MLKM…LASL, and AYYL…VSII. The Extracellular segment spans residues 115 to 215; the sequence is HPGGAAQKET…EIVYKSEPGT (101 aa). Residue Asn-190 is glycosylated (N-linked (GlcNAc...) asparagine). A helical membrane pass occupies residues 216–236; that stretch reads SDGMNVLGIVIFSATMGIMLG. N-linked (GlcNAc...) asparagine glycosylation occurs at Asn-253. 6 helical membrane-spanning segments follow: residues 259–279, 298–318, 329–349, 371–391, 413–433, and 456–476; these read IVAV…AGKI, TVVC…YFLI, GVLQ…TLPI, VGAT…AIFI, AASI…VIVL, and FRTM…AHIC.

The protein belongs to the dicarboxylate/amino acid:cation symporter (DAACS) (TC 2.A.23) family. SLC1A7 subfamily. As to quaternary structure, interacts with the PDZ domains of DLG4. In terms of tissue distribution, expressed in retina, located in both cone and rod photoreceptor terminals and in axon terminals of rod bipolar cells.

Its subcellular location is the photoreceptor inner segment membrane. It localises to the synaptic cell membrane. It carries out the reaction K(+)(in) + L-glutamate(out) + 3 Na(+)(out) + H(+)(out) = K(+)(out) + L-glutamate(in) + 3 Na(+)(in) + H(+)(in). The catalysed reaction is K(+)(in) + L-aspartate(out) + 3 Na(+)(out) + H(+)(out) = K(+)(out) + L-aspartate(in) + 3 Na(+)(in) + H(+)(in). It catalyses the reaction D-aspartate(out) + K(+)(in) + 3 Na(+)(out) + H(+)(out) = D-aspartate(in) + K(+)(out) + 3 Na(+)(in) + H(+)(in). Sodium-dependent, high-affinity amino acid transporter that mediates the uptake of L-glutamate and also L-aspartate and D-aspartate. Functions as a symporter that transports one amino acid molecule together with two or three Na(+) ions and one proton, in parallel with the counter-transport of one K(+) ion. Acts primarily as an inhibitory glutamate-gated chloride channel being a major inhibitory presynaptic receptor at mammalian rod bipolar cell axon terminals. Glutamate binding gates a large Cl(-) conductance that mediates inhibition, affecting visual processing in the retina. This chain is Excitatory amino acid transporter 5, found in Mus musculus (Mouse).